The primary structure comprises 293 residues: Pantothenate synthetase (293 aa).

30–37 (MGYLHKGH) lines the ATP pocket. His-37 serves as the catalytic Proton donor. Gln-61 contributes to the (R)-pantoate binding site. Gln-61 is a beta-alanine binding site. Residue 147 to 150 (GEKD) participates in ATP binding. Residue Gln-153 participates in (R)-pantoate binding. ATP contacts are provided by residues Val-176 and 184–187 (CSSR).

The protein belongs to the pantothenate synthetase family. In terms of assembly, homodimer.

It is found in the cytoplasm. The catalysed reaction is (R)-pantoate + beta-alanine + ATP = (R)-pantothenate + AMP + diphosphate + H(+). It functions in the pathway cofactor biosynthesis; (R)-pantothenate biosynthesis; (R)-pantothenate from (R)-pantoate and beta-alanine: step 1/1. Its function is as follows. Catalyzes the condensation of pantoate with beta-alanine in an ATP-dependent reaction via a pantoyl-adenylate intermediate. The protein is Pantothenate synthetase of Brucella melitensis biotype 2 (strain ATCC 23457).